The following is a 205-amino-acid chain: Myb-related protein 305 (205 aa).

2 HTH myb-type domains span residues 10-62 (DVEV…LNYL) and 63-117 (RPDV…QKHM). DNA-binding regions (H-T-H motif) lie at residues 38 to 62 (WNSLARSAGLKRTGKSCRLRWLNYL) and 90 to 113 (WSKIAKTLPGRTDNEIKNYWRTRI).

Expressed only in flowers.

The protein localises to the nucleus. In terms of biological role, transcription factor. In Antirrhinum majus (Garden snapdragon), this protein is Myb-related protein 305.